A 299-amino-acid chain; its full sequence is N-acetylmuramic acid 6-phosphate etherase (299 aa).

The region spanning 57-220 (ISAAFHKKGR…TTGAMIRTGK (164 aa)) is the SIS domain. Residue Glu-85 is the Proton donor of the active site. Glu-116 is an active-site residue.

The protein belongs to the GCKR-like family. MurNAc-6-P etherase subfamily. Homodimer.

It carries out the reaction N-acetyl-D-muramate 6-phosphate + H2O = N-acetyl-D-glucosamine 6-phosphate + (R)-lactate. It participates in amino-sugar metabolism; 1,6-anhydro-N-acetylmuramate degradation. Its pathway is amino-sugar metabolism; N-acetylmuramate degradation. It functions in the pathway cell wall biogenesis; peptidoglycan recycling. In terms of biological role, specifically catalyzes the cleavage of the D-lactyl ether substituent of MurNAc 6-phosphate, producing GlcNAc 6-phosphate and D-lactate. Together with AnmK, is also required for the utilization of anhydro-N-acetylmuramic acid (anhMurNAc) either imported from the medium or derived from its own cell wall murein, and thus plays a role in cell wall recycling. The polypeptide is N-acetylmuramic acid 6-phosphate etherase (Psychromonas ingrahamii (strain DSM 17664 / CCUG 51855 / 37)).